A 161-amino-acid polypeptide reads, in one-letter code: Putative 4-hydroxy-4-methyl-2-oxoglutarate aldolase (161 aa).

Substrate contacts are provided by residues 75 to 78 (GDQL) and Arg-97. Residue Asp-98 participates in a divalent metal cation binding.

Belongs to the class II aldolase/RraA-like family. In terms of assembly, homotrimer. A divalent metal cation serves as cofactor.

The catalysed reaction is 4-hydroxy-4-methyl-2-oxoglutarate = 2 pyruvate. It catalyses the reaction oxaloacetate + H(+) = pyruvate + CO2. Catalyzes the aldol cleavage of 4-hydroxy-4-methyl-2-oxoglutarate (HMG) into 2 molecules of pyruvate. Also contains a secondary oxaloacetate (OAA) decarboxylase activity due to the common pyruvate enolate transition state formed following C-C bond cleavage in the retro-aldol and decarboxylation reactions. The sequence is that of Putative 4-hydroxy-4-methyl-2-oxoglutarate aldolase from Vibrio cholerae serotype O1 (strain ATCC 39315 / El Tor Inaba N16961).